We begin with the raw amino-acid sequence, 805 residues long: Kinesin-like protein KIP3 (805 aa).

Residues Ser10–Ile438 form the Kinesin motor domain. Gly192–Thr199 is a binding site for ATP. A coiled-coil region spans residues Leu449–Lys481. The tract at residues Asn720–Lys805 is disordered. Residues Met764–Gly773 show a composition bias toward polar residues. Low complexity predominate over residues Pro774–Ala783. Residues Ser792–Lys805 are compositionally biased toward polar residues.

It belongs to the TRAFAC class myosin-kinesin ATPase superfamily. Kinesin family. Kinesin II subfamily.

It localises to the cytoplasm. Its subcellular location is the cytoskeleton. This Saccharomyces cerevisiae (strain ATCC 204508 / S288c) (Baker's yeast) protein is Kinesin-like protein KIP3 (KIP3).